Consider the following 393-residue polypeptide: Arginine biosynthesis bifunctional protein ArgJ (393 aa).

Substrate contacts are provided by T142, K168, T179, E265, N388, and S393. Residue T179 is the Nucleophile of the active site.

This sequence belongs to the ArgJ family. As to quaternary structure, heterotetramer of two alpha and two beta chains.

Its subcellular location is the cytoplasm. It catalyses the reaction N(2)-acetyl-L-ornithine + L-glutamate = N-acetyl-L-glutamate + L-ornithine. The enzyme catalyses L-glutamate + acetyl-CoA = N-acetyl-L-glutamate + CoA + H(+). Its pathway is amino-acid biosynthesis; L-arginine biosynthesis; L-ornithine and N-acetyl-L-glutamate from L-glutamate and N(2)-acetyl-L-ornithine (cyclic): step 1/1. The protein operates within amino-acid biosynthesis; L-arginine biosynthesis; N(2)-acetyl-L-ornithine from L-glutamate: step 1/4. Catalyzes two activities which are involved in the cyclic version of arginine biosynthesis: the synthesis of N-acetylglutamate from glutamate and acetyl-CoA as the acetyl donor, and of ornithine by transacetylation between N(2)-acetylornithine and glutamate. The protein is Arginine biosynthesis bifunctional protein ArgJ of Desulfotalea psychrophila (strain LSv54 / DSM 12343).